Here is a 742-residue protein sequence, read N- to C-terminus: Potassium transporter 19 (742 aa).

The Cytoplasmic segment spans residues 1–46; it reads MSVQEDGAARPEPDVLRRHDSLYGDAEKVSNNKRHGAGGSWARTLQ. The chain crosses the membrane as a helical span at residues 47–67; it reads LAFQSIGVVYGDVGTSPLYVY. The Extracellular portion of the chain corresponds to 68-83; it reads SSTFPNGIKHPDDLVG. The chain crosses the membrane as a helical span at residues 84-104; the sequence is VLSLILYTLILIPMVKYVFIV. At 105–170 the chain is on the cytoplasmic side; sequence LYANDNGDGG…QKLESSNAAK (66 aa). A helical membrane pass occupies residues 171–191; that stretch reads IALFTITILGTSMVMGDGTLT. At 192–206 the chain is on the extracellular side; it reads PAISVLSAVSGIREK. Residues 207 to 227 form a helical membrane-spanning segment; it reads APNLTQSQVVWISVAILFVLF. Over 228–236 the chain is Cytoplasmic; sequence SMQRFGTDK. The chain crosses the membrane as a helical span at residues 237-257; that stretch reads VGYTFAPVISVWFLLIAGIGM. At 258–287 the chain is on the extracellular side; the sequence is YNLTVHEITILRAFNPKYIVDYFRRNGKEA. N-linked (GlcNAc...) asparagine glycosylation is present at Asn-259. A helical membrane pass occupies residues 288-308; sequence WVSLGGVVLCITGTEAMFADL. Over 309–317 the chain is Cytoplasmic; sequence GHFNIRAIQ. The chain crosses the membrane as a helical span at residues 318 to 338; it reads LSFTCVLFPSVALCYMGQAAY. The Extracellular portion of the chain corresponds to 339–352; that stretch reads LRKFPENVGDTFYR. A helical membrane pass occupies residues 353-373; sequence SIPAPLFWPVFVVAIMGAIIA. At 374–409 the chain is on the cytoplasmic side; that stretch reads SQAMLSGAFAILSKALSLGCFPRVEVVHTSNKYEGQ. The chain crosses the membrane as a helical span at residues 410–430; sequence VYIPEVNFLIGAASVAVTLAF. The Extracellular portion of the chain corresponds to 431–441; that stretch reads QTTANIGNAYG. Residues 442-462 traverse the membrane as a helical segment; the sequence is ICVVTVFSITTHLMTVVMLLI. Residues 463-468 lie on the Cytoplasmic side of the membrane; that stretch reads WKVRLP. The helical transmembrane segment at 469-489 threads the bilayer; the sequence is FIAAFYAAFGLAEFLYLSSIL. Residues 490-495 lie on the Extracellular side of the membrane; that stretch reads SKFAEG. A helical transmembrane segment spans residues 496 to 516; the sequence is GYLPFCFSLVLMALMATWHYV. Over 517 to 742 the chain is Cytoplasmic; the sequence is HVKRYWYELD…LLKVGITYEI (226 aa).

This sequence belongs to the HAK/KUP transporter (TC 2.A.72.3) family.

The protein localises to the membrane. Functionally, high-affinity potassium transporter. The protein is Potassium transporter 19 (HAK19) of Oryza sativa subsp. japonica (Rice).